Consider the following 317-residue polypeptide: uncharacterized protein (317 aa).

The helical transmembrane segment at 11 to 31 threads the bilayer; sequence ALLLVIFGSLIVSFAIFFMVL. PASTA domains follow at residues 33 to 100, 101 to 174, and 180 to 241; these read NNEI…FISK, GAII…LISK, and DKHV…TIAK.

The protein localises to the membrane. This is an uncharacterized protein from Borreliella burgdorferi (strain ATCC 35210 / DSM 4680 / CIP 102532 / B31) (Borrelia burgdorferi).